We begin with the raw amino-acid sequence, 359 residues long: MKSIGLNLSGREYKILIGSDLLAETADLLKQAIPCDRVVVITNIDINRLYGKKLKKHLESKGIGSLFLELPEGEIHKSLDMASHIYPQLINHFAERNTPILALGGGVIGDLSGFVAATYQRGVPLVHLPTSLLSQVDSSIGGKVAVNHGGIKNIVGSFYQPRLVISDISCLKTLPEKEFACGMAEIIKSAAIGSSELFKQLETNTPAIKDRSPEIMEDIISQTAAIKAGIVCQDETDRGIRNILNFGHTLGHALESTSSFSQSHGAAVAIGMCFASRLSVKLGLCENETVLRLEKLIADFGLPTRPQDIDPEKIIDAMHHDKKVSDGRIRFILLKRPGEPLIAENILRADVISILEEMK.

Residues 72 to 77 (EGEIHK), 106 to 110 (GVIGD), 130 to 131 (TS), Lys-143, Lys-152, and 170 to 173 (CLKT) contribute to the NAD(+) site. Zn(2+)-binding residues include Glu-185, His-248, and His-264.

Belongs to the sugar phosphate cyclases superfamily. Dehydroquinate synthase family. Requires Co(2+) as cofactor. Zn(2+) serves as cofactor. NAD(+) is required as a cofactor.

It is found in the cytoplasm. The catalysed reaction is 7-phospho-2-dehydro-3-deoxy-D-arabino-heptonate = 3-dehydroquinate + phosphate. It participates in metabolic intermediate biosynthesis; chorismate biosynthesis; chorismate from D-erythrose 4-phosphate and phosphoenolpyruvate: step 2/7. Its function is as follows. Catalyzes the conversion of 3-deoxy-D-arabino-heptulosonate 7-phosphate (DAHP) to dehydroquinate (DHQ). The protein is 3-dehydroquinate synthase of Dehalococcoides mccartyi (strain ATCC BAA-2266 / KCTC 15142 / 195) (Dehalococcoides ethenogenes (strain 195)).